The sequence spans 92 residues: Small ribosomal subunit protein uS19 (92 aa).

The protein belongs to the universal ribosomal protein uS19 family.

Functionally, protein S19 forms a complex with S13 that binds strongly to the 16S ribosomal RNA. In Acidovorax sp. (strain JS42), this protein is Small ribosomal subunit protein uS19.